A 145-amino-acid chain; its full sequence is D-aminoacyl-tRNA deacylase (145 aa).

The Gly-cisPro motif, important for rejection of L-amino acids motif lies at 137–138; that stretch reads GP.

This sequence belongs to the DTD family. Homodimer.

Its subcellular location is the cytoplasm. The enzyme catalyses glycyl-tRNA(Ala) + H2O = tRNA(Ala) + glycine + H(+). It catalyses the reaction a D-aminoacyl-tRNA + H2O = a tRNA + a D-alpha-amino acid + H(+). Functionally, an aminoacyl-tRNA editing enzyme that deacylates mischarged D-aminoacyl-tRNAs. Also deacylates mischarged glycyl-tRNA(Ala), protecting cells against glycine mischarging by AlaRS. Acts via tRNA-based rather than protein-based catalysis; rejects L-amino acids rather than detecting D-amino acids in the active site. By recycling D-aminoacyl-tRNA to D-amino acids and free tRNA molecules, this enzyme counteracts the toxicity associated with the formation of D-aminoacyl-tRNA entities in vivo and helps enforce protein L-homochirality. In Shewanella halifaxensis (strain HAW-EB4), this protein is D-aminoacyl-tRNA deacylase.